We begin with the raw amino-acid sequence, 885 residues long: DNA replication licensing factor REC (885 aa).

Positions 36–76 (RVIPAGGNRQPNQGEPGAPDAPSVPPATRQPRGWSRTAGKR) are disordered. The C4-type zinc-finger motif lies at 281–308 (CSRCQMEIAMRQRGTFQPRPYQCKRSEC). Residues 430–627 (SFKLLVQSIA…ERDMSLTAHV (198 aa)) form the MCM domain. Residue 473 to 480 (GDPGIGKT) participates in ATP binding. A compositionally biased stretch (polar residues) spans 796 to 805 (SLKEGSSRQG). Residues 796 to 818 (SLKEGSSRQGTRGGGGAGGGAGK) form a disordered region. A compositionally biased stretch (gly residues) spans 806 to 817 (TRGGGGAGGGAG).

This sequence belongs to the MCM family.

Its subcellular location is the nucleus. Its function is as follows. Required for meiotic DNA recombination in females. Probably not involved in DNA repair and recombination in somatic cells. In Drosophila melanogaster (Fruit fly), this protein is DNA replication licensing factor REC (rec).